A 150-amino-acid polypeptide reads, in one-letter code: 3-dehydroquinate dehydratase (150 aa).

The Proton acceptor role is filled by Y22. 3 residues coordinate substrate: N73, H79, and D86. The Proton donor role is filled by H99. Substrate contacts are provided by residues 100–101 (LS) and R110.

It belongs to the type-II 3-dehydroquinase family. As to quaternary structure, homododecamer.

It catalyses the reaction 3-dehydroquinate = 3-dehydroshikimate + H2O. It functions in the pathway metabolic intermediate biosynthesis; chorismate biosynthesis; chorismate from D-erythrose 4-phosphate and phosphoenolpyruvate: step 3/7. Its function is as follows. Catalyzes a trans-dehydration via an enolate intermediate. The chain is 3-dehydroquinate dehydratase from Dinoroseobacter shibae (strain DSM 16493 / NCIMB 14021 / DFL 12).